We begin with the raw amino-acid sequence, 463 residues long: RuvB-like helicase 2 (463 aa).

76 to 83 lines the ATP pocket; sequence GPPSTGKT.

It belongs to the RuvB family. In terms of assembly, may form heterododecamers with RVB1. Component of the SWR1 chromatin remodeling complex, the INO80 chromatin remodeling complex, and of the R2TP complex.

The protein localises to the nucleus. It carries out the reaction ATP + H2O = ADP + phosphate + H(+). DNA helicase which participates in several chromatin remodeling complexes, including the SWR1 and the INO80 complexes. The SWR1 complex mediates the ATP-dependent exchange of histone H2A for the H2A variant HZT1 leading to transcriptional regulation of selected genes by chromatin remodeling. The INO80 complex remodels chromatin by shifting nucleosomes and is involved in DNA repair. Also involved in pre-rRNA processing. The sequence is that of RuvB-like helicase 2 (RVB2) from Cryptococcus neoformans var. neoformans serotype D (strain JEC21 / ATCC MYA-565) (Filobasidiella neoformans).